Reading from the N-terminus, the 643-residue chain is Transmembrane 9 superfamily member 4 (643 aa).

An N-terminal signal peptide occupies residues M1–T23. Residues F24–F282 are Extracellular-facing. The chain crosses the membrane as a helical span at residues S283–I303. The Cytoplasmic portion of the chain corresponds to R304 to S347. Y313 bears the Phosphotyrosine mark. The helical transmembrane segment at L348–L368 threads the bilayer. Residues G369–G377 lie on the Extracellular side of the membrane. A helical membrane pass occupies residues A378–A398. The Cytoplasmic segment spans residues G399–T417. The chain crosses the membrane as a helical span at residues A418–G438. The Extracellular portion of the chain corresponds to K439–M450. Residues V451–F471 form a helical membrane-spanning segment. At G472–V502 the chain is on the cytoplasmic side. The helical transmembrane segment at G503–F523 threads the bilayer. Residues S524–G536 are Extracellular-facing. The chain crosses the membrane as a helical span at residues F537 to V557. Residues Y558 to R571 lie on the Cytoplasmic side of the membrane. A helical membrane pass occupies residues N572–V592. The Extracellular segment spans residues N593 to E599. A helical membrane pass occupies residues F600 to L620. Over T621 to D643 the chain is Cytoplasmic.

The protein belongs to the nonaspanin (TM9SF) (TC 9.A.2) family.

The protein resides in the membrane. It localises to the golgi apparatus. Its subcellular location is the early endosome. Its function is as follows. Associates with proteins harboring glycine-rich transmembrane domains and ensures their efficient localization to the cell surface. This Mus musculus (Mouse) protein is Transmembrane 9 superfamily member 4 (Tm9sf4).